Reading from the N-terminus, the 212-residue chain is 3-isopropylmalate dehydratase small subunit (212 aa).

It belongs to the LeuD family. LeuD type 1 subfamily. In terms of assembly, heterodimer of LeuC and LeuD.

The catalysed reaction is (2R,3S)-3-isopropylmalate = (2S)-2-isopropylmalate. The protein operates within amino-acid biosynthesis; L-leucine biosynthesis; L-leucine from 3-methyl-2-oxobutanoate: step 2/4. Its function is as follows. Catalyzes the isomerization between 2-isopropylmalate and 3-isopropylmalate, via the formation of 2-isopropylmaleate. This chain is 3-isopropylmalate dehydratase small subunit, found in Beutenbergia cavernae (strain ATCC BAA-8 / DSM 12333 / CCUG 43141 / JCM 11478 / NBRC 16432 / NCIMB 13614 / HKI 0122).